The following is a 331-amino-acid chain: Transmembrane protein 59-like (331 aa).

The N-terminal stretch at 1–21 is a signal peptide; that stretch reads MAAVALPLLLLLASPATPTPA. The interval 15-62 is disordered; it reads PATPTPARDPFSPQLGDTQRCQQRCRQRHPGLPPAQPEPEGPSESPNN. Positions 45–54 are enriched in pro residues; that stretch reads GLPPAQPEPE. Residue Asn-90 is glycosylated (N-linked (GlcNAc...) asparagine). The chain crosses the membrane as a helical span at residues 258–278; the sequence is VLFCCLFLSVLIILWLSCCTL. The Microbody targeting signal motif lies at 329-331; sequence TTL.

This sequence belongs to the TMEM59 family.

The protein resides in the golgi apparatus membrane. Its function is as follows. Modulates the O-glycosylation and complex N-glycosylation steps occurring during the Golgi maturation of APP. Inhibits APP transport to the cell surface and further shedding. The protein is Transmembrane protein 59-like (Tmem59l) of Rattus norvegicus (Rat).